Reading from the N-terminus, the 336-residue chain is Protein FPV127 (336 aa).

The segment at 1 to 22 (MGGGLVLPTRDPPKEQDTSETA) is disordered.

It belongs to the poxviruses A16/G9/J5 family.

In Vertebrata (FPV), this protein is Protein FPV127.